The following is a 291-amino-acid chain: Ribose-phosphate pyrophosphokinase (291 aa).

ATP contacts are provided by residues 34–36 and 93–94; these read DGE and RQ. Mg(2+) contacts are provided by H127 and D165. K188 is an active-site residue. D-ribose 5-phosphate contacts are provided by residues R190, D216, and 220–224; that span reads STGGT.

The protein belongs to the ribose-phosphate pyrophosphokinase family. Class III (archaeal) subfamily. The cofactor is Mg(2+).

It localises to the cytoplasm. The catalysed reaction is D-ribose 5-phosphate + ATP = 5-phospho-alpha-D-ribose 1-diphosphate + AMP + H(+). The protein operates within metabolic intermediate biosynthesis; 5-phospho-alpha-D-ribose 1-diphosphate biosynthesis; 5-phospho-alpha-D-ribose 1-diphosphate from D-ribose 5-phosphate (route I): step 1/1. In terms of biological role, involved in the biosynthesis of the central metabolite phospho-alpha-D-ribosyl-1-pyrophosphate (PRPP) via the transfer of pyrophosphoryl group from ATP to 1-hydroxyl of ribose-5-phosphate (Rib-5-P). The sequence is that of Ribose-phosphate pyrophosphokinase from Sulfolobus acidocaldarius (strain ATCC 33909 / DSM 639 / JCM 8929 / NBRC 15157 / NCIMB 11770).